The following is a 100-amino-acid chain: U-myrmeciitoxin(01)-Mg7b (100 aa).

An N-terminal signal peptide occupies residues 1 to 17 (MKLSCLSLALAIILVLA). A propeptide spanning residues 18–50 (IVYSPHMEVKALADAEPDAIGFADAFGEADAEP) is cleaved from the precursor. An O-linked (GalNAc...) serine glycan is attached at S85. O-linked (GalNAc...) threonine glycans are attached at residues T94 and T95.

The protein belongs to the formicidae venom precursor-01 superfamily. Post-translationally, glycosylation is critical to maintaining the aqueous solubility of this protein, but does not directly contribute to its activity. As to expression, expressed by the venom gland.

It localises to the secreted. The protein localises to the target cell membrane. In terms of biological role, neurotoxin that triggers pain behavior and inflammation in mammals, and is paralytic and lethal to insects. Causes a time-dependent increase in cell leak current. May act by targeting membranes. The polypeptide is U-myrmeciitoxin(01)-Mg7b (Myrmecia gulosa (Red bulldog ant)).